The following is a 216-amino-acid chain: Imidazoleglycerol-phosphate dehydratase (216 aa).

The protein belongs to the imidazoleglycerol-phosphate dehydratase family.

The protein resides in the cytoplasm. The enzyme catalyses D-erythro-1-(imidazol-4-yl)glycerol 3-phosphate = 3-(imidazol-4-yl)-2-oxopropyl phosphate + H2O. It functions in the pathway amino-acid biosynthesis; L-histidine biosynthesis; L-histidine from 5-phospho-alpha-D-ribose 1-diphosphate: step 6/9. The sequence is that of Imidazoleglycerol-phosphate dehydratase from Nocardia farcinica (strain IFM 10152).